We begin with the raw amino-acid sequence, 556 residues long: Solute carrier family 22 member 20 (556 aa).

At 1–15 the chain is on the cytoplasmic side; it reads MAFTDLLDALGGVGR. A helical transmembrane segment spans residues 16–36; sequence FQLVYTALLLLPCGLLACHTF. Topologically, residues 37 to 137 are extracellular; it reads LQNFTAAAPP…LVCEARTLRD (101 aa). Residues N39, N54, N61, and N96 are each glycosylated (N-linked (GlcNAc...) asparagine). Residues 138-158 form a helical membrane-spanning segment; it reads LAQSIYMSGVLVGAALFGGLA. Residues 159–166 are Cytoplasmic-facing; that stretch reads DRLGRKAP. A helical transmembrane segment spans residues 167-187; the sequence is LVWSYLQLAVSGAATAYVGSF. Over 188–194 the chain is Extracellular; it reads SAYCVFR. A helical transmembrane segment spans residues 195 to 215; sequence FLMGMTFSGIILNSLSLVVEW. Topologically, residues 216–225 are cytoplasmic; that stretch reads MPTRGRTVAG. A helical transmembrane segment spans residues 226–246; the sequence is ILLGFSFTLGQLILAGVAYLI. The Extracellular segment spans residues 247-250; that stretch reads RPWR. Residues 251-271 form a helical membrane-spanning segment; it reads WLQFAVSAPFLVFFLYSWWLP. At 272-339 the chain is on the cytoplasmic side; sequence ESSRWLLLHG…DLFRTPAIRR (68 aa). The chain crosses the membrane as a helical span at residues 340–360; the sequence is VTCCLMGVWFSNSVAYYGLAM. The Extracellular segment spans residues 361–366; it reads DLQKFG. The chain crosses the membrane as a helical span at residues 367 to 387; the sequence is LSIYLVQALFGIIDIPAMLVA. Over 388–397 the chain is Cytoplasmic; the sequence is TTTMIYVGRR. The helical transmembrane segment at 398-418 threads the bilayer; the sequence is ATVSSFLILAGLMVIANMFMP. At 419–425 the chain is on the extracellular side; it reads EDLQTLR. A helical membrane pass occupies residues 426-446; that stretch reads TVQAALGKGCLASSFICVYLF. The Cytoplasmic portion of the chain corresponds to 447-457; the sequence is TGELYPTEIRQ. The chain crosses the membrane as a helical span at residues 458–478; sequence MGMGFASVNARLGGLVAPLIT. Residues 479-485 lie on the Extracellular side of the membrane; it reads TLGEISP. A helical membrane pass occupies residues 486–506; it reads VLPPVSFGATSVLAGMAVACF. Residues 507-556 lie on the Cytoplasmic side of the membrane; the sequence is LTETRNVPLVETIAAMERRVKQGRSKRDTEQKSEEISLQQLGASPLKETI. Basic and acidic residues predominate over residues 526–541; the sequence is VKQGRSKRDTEQKSEE. The tract at residues 526-556 is disordered; that stretch reads VKQGRSKRDTEQKSEEISLQQLGASPLKETI.

The protein belongs to the major facilitator (TC 2.A.1) superfamily. Organic cation transporter (TC 2.A.1.19) family. Highly expressed in olfactory mucosa. Weakly expressed in testis. Not detected in heart, spleen, lung, kidney or brain.

The protein localises to the membrane. Organic anion transporter that mediates the uptake of estrone sulfate. Inhibited by probenecid, propionate, 2-methylbutyrate, 3-methylbutyrate, benzoate, heptanoate and 2-ethylhaxanoate. May act as an odorant transporter. This chain is Solute carrier family 22 member 20 (Slc22a20), found in Mus musculus (Mouse).